The primary structure comprises 130 residues: Bet1-like SNARE 1-2 (130 aa).

Over 1 to 106 (MNFRRENRAS…EKKSNRKSCK (106 aa)) the chain is Cytoplasmic. Residues 33 to 95 (AHDERDNDEA…SGTINRFKLV (63 aa)) enclose the t-SNARE coiled-coil homology domain. The stretch at 40–82 (DEALENLQDRVSFLKRVTGDIHEEVENHNRLLDKVGNKMDSAR) forms a coiled coil. Residues 107-122 (LIAYFVLLFLIMYYLI) form a helical; Anchor for type IV membrane protein membrane-spanning segment. Topologically, residues 123 to 130 (RLLNYIKG) are vesicular.

Belongs to the BET1 family.

The protein localises to the golgi apparatus membrane. Its subcellular location is the endoplasmic reticulum membrane. Functionally, required for vesicular transport from the ER to the Golgi complex. Functions as a SNARE associated with ER-derived vesicles. This is Bet1-like SNARE 1-2 (BET12) from Arabidopsis thaliana (Mouse-ear cress).